Here is a 1148-residue protein sequence, read N- to C-terminus: Phospholipid-transporting ATPase IB (1148 aa).

Residues 1-44 (MSRATSVGDQLEAPARIIYLNQSHLNKFCDNRISTAKYSVLTFL) lie on the Cytoplasmic side of the membrane. Thr-5 carries the post-translational modification Phosphothreonine. Residues 45–66 (PRFLYEQIRRAANAFFLFIALL) form a helical membrane-spanning segment. The Exoplasmic loop segment spans residues 67–71 (QQIPD). Residues 72–94 (VSPTGRYTTLVPLVIILTIAGIK) traverse the membrane as a helical segment. The Cytoplasmic portion of the chain corresponds to 95–276 (EIIEDFKRHK…SNVEKVTNVQ (182 aa)). Residues 277–298 (ILVLFGILLVMALVSSVGALFW) traverse the membrane as a helical segment. Residues 299–323 (NGSHGGKSWYIKKMDTNSDNFGYNL) are Exoplasmic loop-facing. Residues 324–345 (LTFIILYNNLIPISLLVTLEVV) traverse the membrane as a helical segment. Topologically, residues 346–837 (KYTQALFINW…GAWSYNRVTK (492 aa)) are cytoplasmic. Asp-388 serves as the catalytic 4-aspartylphosphate intermediate. Positions 388, 389, 390, 488, 529, 552, 585, 665, 666, 667, 755, and 761 each coordinate ATP. Asp-388 contributes to the Mg(2+) binding site. Thr-390 is a binding site for Mg(2+). A Mg(2+)-binding site is contributed by Asp-781. Positions 784 and 785 each coordinate ATP. Asp-785 lines the Mg(2+) pocket. A helical membrane pass occupies residues 838-858 (CILYCFYKNVVLYIIELWFAF). Over 859-870 (VNGFSGQILFER) the chain is Exoplasmic loop. Residues 871–890 (WCIGLYNVIFTALPPFTLGI) form a helical membrane-spanning segment. Topologically, residues 891-920 (FERSCTQESMLRFPQLYRITQNAEGFNTKV) are cytoplasmic. Residues 921–942 (FWGHCINALVHSLILFWVPMKA) form a helical membrane-spanning segment. At 943–956 (LEHDTPVTSGHATD) the chain is on the exoplasmic loop side. The helical transmembrane segment at 957-979 (YLFVGNIVYTYVVVTVCLKAGLE) threads the bilayer. At 980–985 (TTAWTK) the chain is on the cytoplasmic side. The helical transmembrane segment at 986–1006 (FSHLAVWGSMLIWLVFFGVYS) threads the bilayer. The Exoplasmic loop portion of the chain corresponds to 1007–1024 (TIWPTIPIAPDMKGQATM). The helical transmembrane segment at 1025-1049 (VLSSAYFWLGLFLVPTACLIEDVAW) threads the bilayer. The Cytoplasmic segment spans residues 1050-1148 (RAAKHTCKKT…DTTKENSRKK (99 aa)).

Belongs to the cation transport ATPase (P-type) (TC 3.A.3) family. Type IV subfamily. In terms of assembly, component of a P4-ATPase flippase complex which consists of a catalytic alpha subunit and an accessory beta subunit. Interacts with TMEM30A to form a flippase complex. Mg(2+) is required as a cofactor. As to expression, found in testis, heart and brain. Most abundant in testis. Also detected in fetal tissues. Expressed in retinal photoreceptor cells; detected in retina outer nuclear layer and inner segment (at protein level).

It is found in the membrane. It localises to the golgi apparatus membrane. The protein localises to the endosome membrane. The protein resides in the cell membrane. Its subcellular location is the photoreceptor outer segment membrane. It is found in the photoreceptor inner segment membrane. The catalysed reaction is ATP + H2O + phospholipidSide 1 = ADP + phosphate + phospholipidSide 2.. It catalyses the reaction a 1,2-diacyl-sn-glycero-3-phospho-L-serine(out) + ATP + H2O = a 1,2-diacyl-sn-glycero-3-phospho-L-serine(in) + ADP + phosphate + H(+). The enzyme catalyses a 1,2-diacyl-sn-glycero-3-phosphoethanolamine(in) + ATP + H2O = a 1,2-diacyl-sn-glycero-3-phosphoethanolamine(out) + ADP + phosphate + H(+). Its function is as follows. Catalytic component of a P4-ATPase flippase complex which catalyzes the hydrolysis of ATP coupled to the transport of aminophospholipids from the outer to the inner leaflet of various membranes and ensures the maintenance of asymmetric distribution of phospholipids. Able to translocate phosphatidylserine, but not phosphatidylcholine. Phospholipid translocation also seems to be implicated in vesicle formation and in uptake of lipid signaling molecules. Reconstituted to liposomes, the ATP8A2:TMEM30A flippase complex predominantly transports phosphatidylserine (PS) and to a lesser extent phosphatidylethanolamine (PE). Phospholipid translocation is not associated with a countertransport of an inorganic ion or other charged substrate from the cytoplasmic side toward the exoplasm in connection with the phosphorylation from ATP. ATP8A2:TMEM30A may be involved in regulation of neurite outgrowth. Proposed to function in the generation and maintenance of phospholipid asymmetry in photoreceptor disk membranes and neuronal axon membranes. May be involved in vesicle trafficking in neuronal cells. Required for normal visual and auditory function; involved in photoreceptor and inner ear spiral ganglion cell survival. The sequence is that of Phospholipid-transporting ATPase IB from Mus musculus (Mouse).